A 141-amino-acid chain; its full sequence is Lysozyme P (141 aa).

A signal peptide spans 1–18 (MKAFLVICALTLTAVATQ). In terms of domain architecture, C-type lysozyme spans 20–141 (RTMDRCSLAR…GSLPSINSCF (122 aa)). Intrachain disulfides connect Cys25–Cys140, Cys46–Cys130, Cys81–Cys97, and Cys93–Cys111. Residues Glu51 and Asp69 contribute to the active site.

This sequence belongs to the glycosyl hydrolase 22 family. Salivary gland.

It carries out the reaction Hydrolysis of (1-&gt;4)-beta-linkages between N-acetylmuramic acid and N-acetyl-D-glucosamine residues in a peptidoglycan and between N-acetyl-D-glucosamine residues in chitodextrins.. Unlikely to play an active role in the humoral immune defense. May have a function in the digestion of bacteria in the food. The sequence is that of Lysozyme P (LysP) from Drosophila melanogaster (Fruit fly).